We begin with the raw amino-acid sequence, 349 residues long: Ribonucleoside-diphosphate reductase small chain (349 aa).

Fe cation-binding residues include D99, E130, and H133. Residue Y137 is part of the active site. Residues E192, E226, and H229 each coordinate Fe cation.

Belongs to the ribonucleoside diphosphate reductase small chain family. Heterodimer of a large and a small subunit. Requires Fe cation as cofactor.

It catalyses the reaction a 2'-deoxyribonucleoside 5'-diphosphate + [thioredoxin]-disulfide + H2O = a ribonucleoside 5'-diphosphate + [thioredoxin]-dithiol. Provides the precursors necessary for DNA synthesis. Catalyzes the biosynthesis of deoxyribonucleotides from the corresponding ribonucleotides. The polypeptide is Ribonucleoside-diphosphate reductase small chain (RNR2) (Plasmodium falciparum (isolate Dd2)).